Reading from the N-terminus, the 217-residue chain is KS1 protein (217 aa).

The signal sequence occupies residues methionine 1 to serine 16. Over residues proline 24–aspartate 47 the composition is skewed to basic and acidic residues. Disordered stretches follow at residues proline 24–aspartate 58 and glutamate 72–lysine 205. Tandem repeats lie at residues lysine 32–glycine 81 and lysine 98–aspartate 147. The 2 X 50 AA approximate repeats stretch occupies residues lysine 32–aspartate 147. 2 stretches are compositionally biased toward acidic residues: residues aspartate 48 to aspartate 58 and glutamate 72 to glutamine 94. A compositionally biased stretch (basic residues) spans lysine 98 to lysine 110. The span at aspartate 114–aspartate 145 shows a compositional bias: acidic residues. Residues lysine 149–glutamine 188 show a composition bias toward basic residues.

In terms of tissue distribution, expressed in tentacle-specific epithelial cells (battery cells) as well as in a small fraction of ectodermal epithelial cells in the gastric region subjacent to the tentacles (the tentacle formation region). The later cells are committed to become battery cells.

Functionally, responds to early signals of head formation in hydra. This chain is KS1 protein (KS1), found in Hydra vulgaris (Hydra).